Here is a 668-residue protein sequence, read N- to C-terminus: Biotin biosynthesis bifunctional protein BioWF (668 aa).

Arg293 provides a ligand contact to substrate. 380 to 381 is a binding site for pyridoxal 5'-phosphate; the sequence is GY. Residue His405 coordinates substrate. Pyridoxal 5'-phosphate is bound by residues Ser451, 476–479, and 507–510; these read DDAH and TASK. Lys510 bears the N6-(pyridoxal phosphate)lysine mark.

The protein in the N-terminal section; belongs to the BioW family. It in the C-terminal section; belongs to the class-II pyridoxal-phosphate-dependent aminotransferase family. BioF subfamily. As to quaternary structure, homodimer. Requires Mg(2+) as cofactor. Pyridoxal 5'-phosphate is required as a cofactor.

It catalyses the reaction heptanedioate + ATP + CoA = 6-carboxyhexanoyl-CoA + AMP + diphosphate. It carries out the reaction 6-carboxyhexanoyl-[ACP] + L-alanine + H(+) = (8S)-8-amino-7-oxononanoate + holo-[ACP] + CO2. It functions in the pathway metabolic intermediate metabolism; pimeloyl-CoA biosynthesis; pimeloyl-CoA from pimelate: step 1/1. It participates in cofactor biosynthesis; biotin biosynthesis. In terms of biological role, catalyzes both the decarboxylative condensation of pimeloyl-[acyl-carrier protein] and L-alanine to produce 8-amino-7-oxononanoate (AON), [acyl-carrier protein], and carbon dioxide, and the transformation of pimelate into pimeloyl-CoA with concomitant hydrolysis of ATP to AMP. This is Biotin biosynthesis bifunctional protein BioWF from Cutibacterium acnes (strain SK137) (Propionibacterium acnes).